A 622-amino-acid polypeptide reads, in one-letter code: Low affinity potassium transport system protein Kup (622 aa).

12 helical membrane passes run 9–29 (LPAITLAAIGVVYGDIGTSPL), 49–69 (VFGFLSLIFWLLIFVVSIKYL), 103–123 (VIMGLIGGSFFYGEVVITPAI), 137–157 (PQLDTWIVPLSIIVLTLLFMI), 165–185 (VGKLFAPIMLTWFLILAGLGL), 213–233 (VSFIALGAVVLSITGVEALYA), 247–267 (WFTVVLPSLTLNYFGQGALLL), 276–296 (PFFLLAPDWALIPLLIIAALA), 337–357 (IYIPFVNWMLYVAVVIVIVSF), 363–383 (LAAAYGIAVTGTMVLTSILST), 396–416 (FVALILIAFLCVDIPLFTANL), and 419–439 (LLSGGWLPLSLGTVMFIVMTT).

This sequence belongs to the HAK/KUP transporter (TC 2.A.72) family.

It is found in the cell inner membrane. It catalyses the reaction K(+)(in) + H(+)(in) = K(+)(out) + H(+)(out). In terms of biological role, responsible for the low-affinity transport of potassium into the cell. Likely operates as a K(+):H(+) symporter. The polypeptide is Low affinity potassium transport system protein Kup (Shigella boydii serotype 18 (strain CDC 3083-94 / BS512)).